The primary structure comprises 143 residues: Anti-sigma F factor (143 aa).

Belongs to the anti-sigma-factor family.

The catalysed reaction is L-seryl-[protein] + ATP = O-phospho-L-seryl-[protein] + ADP + H(+). The enzyme catalyses L-threonyl-[protein] + ATP = O-phospho-L-threonyl-[protein] + ADP + H(+). Functionally, binds to sigma F and blocks its ability to form an RNA polymerase holoenzyme (E-sigma F). Phosphorylates SpoIIAA on a serine residue. This phosphorylation may enable SpoIIAA to act as an anti-anti-sigma factor that counteracts SpoIIAB and thus releases sigma F from inhibition. In Clostridium botulinum (strain Eklund 17B / Type B), this protein is Anti-sigma F factor.